The chain runs to 38 residues: Large ribosomal subunit protein bL36 (38 aa).

This sequence belongs to the bacterial ribosomal protein bL36 family.

In Aster yellows witches'-broom phytoplasma (strain AYWB), this protein is Large ribosomal subunit protein bL36.